The following is a 389-amino-acid chain: Gastricsin (389 aa).

The N-terminal stretch at 1-16 (MKWMVVVLLCLQLLEA) is a signal peptide. Positions 17 to 59 (KVVKVPLKKLKSLRETMKEKGLLEEFLKNHKYDPAQKYRYTDF) are cleaved as a propeptide — activation peptide. Positions 73–386 (YFGEISIGTP…DMGNNRVGFA (314 aa)) constitute a Peptidase A1 domain. Asp-91 is an active-site residue. 2 disulfide bridges follow: Cys-104–Cys-109 and Cys-268–Cys-272. The active site involves Asp-277. A disulfide bridge links Cys-311 with Cys-344.

It belongs to the peptidase A1 family.

The protein localises to the secreted. The catalysed reaction is More restricted specificity than pepsin A, but shows preferential cleavage at Tyr-|-Xaa bonds. High activity on hemoglobin.. Hydrolyzes a variety of proteins. The polypeptide is Gastricsin (PGC) (Rhinolophus ferrumequinum (Greater horseshoe bat)).